A 377-amino-acid polypeptide reads, in one-letter code: Nitric oxide reductase FlRd-NAD(+) reductase (377 aa).

It belongs to the FAD-dependent oxidoreductase family. FAD is required as a cofactor.

It localises to the cytoplasm. It carries out the reaction 2 reduced [nitric oxide reductase rubredoxin domain] + NAD(+) + H(+) = 2 oxidized [nitric oxide reductase rubredoxin domain] + NADH. The protein operates within nitrogen metabolism; nitric oxide reduction. Functionally, one of at least two accessory proteins for anaerobic nitric oxide (NO) reductase. Reduces the rubredoxin moiety of NO reductase. The sequence is that of Nitric oxide reductase FlRd-NAD(+) reductase from Escherichia coli O45:K1 (strain S88 / ExPEC).